The chain runs to 465 residues: Ribulose bisphosphate carboxylase large chain (465 aa).

Residue Lys-4 is modified to N6,N6,N6-trimethyllysine. The substrate site is built by Asn-113 and Thr-163. The active-site Proton acceptor is the Lys-165. Substrate is bound at residue Lys-167. 3 residues coordinate Mg(2+): Lys-191, Asp-193, and Glu-194. Lys-191 carries the N6-carboxylysine modification. The active-site Proton acceptor is the His-284. Residues Arg-285, His-317, and Ser-369 each contribute to the substrate site.

It belongs to the RuBisCO large chain family. Type I subfamily. As to quaternary structure, heterohexadecamer of 8 large chains and 8 small chains; disulfide-linked. The disulfide link is formed within the large subunit homodimers. It depends on Mg(2+) as a cofactor. In terms of processing, the disulfide bond which can form in the large chain dimeric partners within the hexadecamer appears to be associated with oxidative stress and protein turnover.

Its subcellular location is the plastid. It localises to the chloroplast. It catalyses the reaction 2 (2R)-3-phosphoglycerate + 2 H(+) = D-ribulose 1,5-bisphosphate + CO2 + H2O. It carries out the reaction D-ribulose 1,5-bisphosphate + O2 = 2-phosphoglycolate + (2R)-3-phosphoglycerate + 2 H(+). Its function is as follows. RuBisCO catalyzes two reactions: the carboxylation of D-ribulose 1,5-bisphosphate, the primary event in carbon dioxide fixation, as well as the oxidative fragmentation of the pentose substrate in the photorespiration process. Both reactions occur simultaneously and in competition at the same active site. The polypeptide is Ribulose bisphosphate carboxylase large chain (Passiflora quadrangularis (Grenadine)).